A 60-amino-acid chain; its full sequence is uncharacterized protein (60 aa).

The chain crosses the membrane as a helical span at residues 11-33 (VFTVGFITGGVTPVMVSFVWPAA). Residues asparagine 40 and asparagine 57 are each glycosylated (N-linked (GlcNAc...) asparagine; by host).

The protein resides in the host membrane. This is an uncharacterized protein from African swine fever virus (strain Badajoz 1971 Vero-adapted) (Ba71V).